We begin with the raw amino-acid sequence, 545 residues long: Chaperonin GroEL (545 aa).

Residues 30-33 (TLGP), Lys-51, 87-91 (DGTTT), Gly-413, 477-479 (NAA), and Asp-493 contribute to the ATP site.

This sequence belongs to the chaperonin (HSP60) family. Forms a cylinder of 14 subunits composed of two heptameric rings stacked back-to-back. Interacts with the co-chaperonin GroES.

Its subcellular location is the cytoplasm. It catalyses the reaction ATP + H2O + a folded polypeptide = ADP + phosphate + an unfolded polypeptide.. Functionally, together with its co-chaperonin GroES, plays an essential role in assisting protein folding. The GroEL-GroES system forms a nano-cage that allows encapsulation of the non-native substrate proteins and provides a physical environment optimized to promote and accelerate protein folding. This chain is Chaperonin GroEL, found in Pseudomonas putida (Arthrobacter siderocapsulatus).